The following is a 442-amino-acid chain: tRNA modification GTPase MnmE (442 aa).

Residues arginine 24, glutamate 82, and lysine 120 each coordinate (6S)-5-formyl-5,6,7,8-tetrahydrofolate. Residues glycine 217–glutamate 367 enclose the TrmE-type G domain. Residues asparagine 227–threonine 232, serine 246–threonine 252, and aspartate 271–glycine 274 contribute to the GTP site. The Mg(2+) site is built by serine 231 and threonine 252. Lysine 442 contacts (6S)-5-formyl-5,6,7,8-tetrahydrofolate.

It belongs to the TRAFAC class TrmE-Era-EngA-EngB-Septin-like GTPase superfamily. TrmE GTPase family. In terms of assembly, homodimer. Heterotetramer of two MnmE and two MnmG subunits. Requires K(+) as cofactor.

Its subcellular location is the cytoplasm. Functionally, exhibits a very high intrinsic GTPase hydrolysis rate. Involved in the addition of a carboxymethylaminomethyl (cmnm) group at the wobble position (U34) of certain tRNAs, forming tRNA-cmnm(5)s(2)U34. This chain is tRNA modification GTPase MnmE, found in Wolbachia sp. subsp. Drosophila simulans (strain wRi).